We begin with the raw amino-acid sequence, 110 residues long: Ribonuclease P protein component 1 (110 aa).

Belongs to the eukaryotic/archaeal RNase P protein component 1 family. As to quaternary structure, consists of a catalytic RNA component and at least 4-5 protein subunits.

It is found in the cytoplasm. The catalysed reaction is Endonucleolytic cleavage of RNA, removing 5'-extranucleotides from tRNA precursor.. Functionally, part of ribonuclease P, a protein complex that generates mature tRNA molecules by cleaving their 5'-ends. This Methanosarcina acetivorans (strain ATCC 35395 / DSM 2834 / JCM 12185 / C2A) protein is Ribonuclease P protein component 1.